The chain runs to 105 residues: Larval cuticle protein 65Ag1 (105 aa).

An N-terminal signal peptide occupies residues 1–18; it reads MKFLIVFVALFAVALAAP. The Chitin-binding type R&amp;R domain maps to 34-103; the sequence is PESFKYDWET…PQGAHLPVAP (70 aa).

Its function is as follows. Component of the cuticle of the larva. The polypeptide is Larval cuticle protein 65Ag1 (Drosophila melanogaster (Fruit fly)).